The primary structure comprises 207 residues: Phosphatidylinositol phosphate synthase (207 aa).

Helical transmembrane passes span 21–44 (LRAH…MALI) and 50–67 (WLWQ…SDSL). 28-31 (DVVT) provides a ligand contact to a CDP-1,2-diacyl-sn-glycerol. Mg(2+)-binding residues include Asp-65 and Asp-68. Gly-69, Arg-73, and Ser-79 together coordinate a CDP-1,2-diacyl-sn-glycerol. Mg(2+) contacts are provided by Asp-86 and Asp-90. The next 4 membrane-spanning stretches (helical) occupy residues 88 to 106 (TLDR…LYFA), 112 to 131 (VLWT…TSYV), 152 to 170 (RLLV…RVGA), and 176 to 195 (VVAL…ITVV). The active-site Proton acceptor is Asp-90.

This sequence belongs to the CDP-alcohol phosphatidyltransferase class-I family. In terms of assembly, homodimer. Mg(2+) is required as a cofactor.

The protein localises to the cell membrane. It carries out the reaction a CDP-1,2-diacyl-sn-glycerol + 1D-myo-inositol 3-phosphate = a 1,2-diacyl-sn-glycero-3-phospho-(1D-myo-inositol-3-phosphate) + CMP + H(+). The enzyme catalyses 1,2-di-(9Z-octadecenoyl)-sn-glycero-3-cytidine-5'-diphosphate + 1D-myo-inositol 3-phosphate = 1,2-di-(9Z-octadecenoyl)-sn-glycero-3-phospho-(1D-myo-inositol-3-phosphate) + CMP + H(+). It functions in the pathway phospholipid metabolism; phosphatidylinositol phosphate biosynthesis. In terms of biological role, catalyzes the conjugation of the 1'-hydroxyl group of D-myo-inositol-3-phosphate (also named L-myo-inositol-1-phosphate) with a lipid tail of cytidine diphosphate diacylglycerol (CDP-DAG), forming phosphatidylinositol phosphate (PIP) and CMP. PIP is a precursor of phosphatidylinositol (PI) which is an essential lipid required for cell wall formation. The protein is Phosphatidylinositol phosphate synthase of Cutibacterium acnes (strain DSM 16379 / KPA171202) (Propionibacterium acnes).